Reading from the N-terminus, the 554-residue chain is MLRCRSSINILQLHSRFHTHEIIISSKESEARTRITDEERLVIKRFPIFKNDSSYILPSSNKLTKVKKEHIALKIHKIKKLFGEDPNNVGYLNYHLPKSYPVPFEINNRAYDNSDGNGENEKVRNRLSVTKLLTKRWCELREAYDIYSETPLFEHKQIIEGKLVHQKLEEDIHPVTEDLESFVEDFEVPIPTDNFHNHVDDLFSCSMRLLSLFRCGEAREVRCHAFLDSRTGTFIDGLPKDGKDVLVSGIIDHLSLRRKIRVFTSSGFTEFNGLNDEVFENGNNFQSIIEWLNANIDFLKSEYQINVSDVKTRMFRSVVSQKSVLKYSKYQVMYYRYFLELLGLHPDVTYGQLLNSSLSRGFNIDQRIDPAKVIYFMASDEVIVDDMRKLRDGDDIGFPPFDSDFTGSSPTEEEYDMSILSDQITDPNVLERYGEFLVPWKRPVTLKYFAARLAQMYNCISPLLSKHLTLEYYYKGDNFKNINFDFNEDEIRNGAFDSSMFWFGKRDIEPIEPTSENLITYCKYCDYVNVCSWRQKATQQKKELGPRLLKLNQN.

The N-terminal 17 residues, 1-17 (MLRCRSSINILQLHSRF), are a transit peptide targeting the mitochondrion. Residues Cys-138, Cys-522, Cys-525, and Cys-531 each contribute to the [4Fe-4S] cluster site.

Belongs to the EXO5 family. In terms of assembly, monomer. Requires Mg(2+) as cofactor. [4Fe-4S] cluster is required as a cofactor.

It is found in the mitochondrion. Its function is as follows. Single strand DNA specific 5'exonuclease involved in mitochondrial DNA replication and recombination. Releases dinucleotides as main products of catalysis. Has the capacity to slide across 5'double-stranded DNA or 5'RNA sequences and resumes cutting two nucleotides downstream of the double-stranded-to-single-stranded junction or RNA-to-DNA junction, respectively. In Vanderwaltozyma polyspora (strain ATCC 22028 / DSM 70294 / BCRC 21397 / CBS 2163 / NBRC 10782 / NRRL Y-8283 / UCD 57-17) (Kluyveromyces polysporus), this protein is Exonuclease V, mitochondrial (EXO5).